The chain runs to 228 residues: Phosphoribosylformylglycinamidine synthase subunit PurQ (228 aa).

In terms of domain architecture, Glutamine amidotransferase type-1 spans 2–225 (KAAVISFPGS…INQTEGADVR (224 aa)). Residue C86 is the Nucleophile of the active site. Catalysis depends on residues H194 and E196.

Part of the FGAM synthase complex composed of 1 PurL, 1 PurQ and 2 PurS subunits.

It is found in the cytoplasm. The enzyme catalyses N(2)-formyl-N(1)-(5-phospho-beta-D-ribosyl)glycinamide + L-glutamine + ATP + H2O = 2-formamido-N(1)-(5-O-phospho-beta-D-ribosyl)acetamidine + L-glutamate + ADP + phosphate + H(+). It catalyses the reaction L-glutamine + H2O = L-glutamate + NH4(+). It functions in the pathway purine metabolism; IMP biosynthesis via de novo pathway; 5-amino-1-(5-phospho-D-ribosyl)imidazole from N(2)-formyl-N(1)-(5-phospho-D-ribosyl)glycinamide: step 1/2. Functionally, part of the phosphoribosylformylglycinamidine synthase complex involved in the purines biosynthetic pathway. Catalyzes the ATP-dependent conversion of formylglycinamide ribonucleotide (FGAR) and glutamine to yield formylglycinamidine ribonucleotide (FGAM) and glutamate. The FGAM synthase complex is composed of three subunits. PurQ produces an ammonia molecule by converting glutamine to glutamate. PurL transfers the ammonia molecule to FGAR to form FGAM in an ATP-dependent manner. PurS interacts with PurQ and PurL and is thought to assist in the transfer of the ammonia molecule from PurQ to PurL. This chain is Phosphoribosylformylglycinamidine synthase subunit PurQ, found in Lacticaseibacillus casei (strain BL23) (Lactobacillus casei).